The primary structure comprises 90 residues: Probable Fe(2+)-trafficking protein (90 aa).

The protein belongs to the Fe(2+)-trafficking protein family.

Its function is as follows. Could be a mediator in iron transactions between iron acquisition and iron-requiring processes, such as synthesis and/or repair of Fe-S clusters in biosynthetic enzymes. The sequence is that of Probable Fe(2+)-trafficking protein from Cupriavidus pinatubonensis (strain JMP 134 / LMG 1197) (Cupriavidus necator (strain JMP 134)).